The sequence spans 271 residues: Pyrroline-5-carboxylate reductase (271 aa).

Belongs to the pyrroline-5-carboxylate reductase family.

The protein resides in the cytoplasm. It carries out the reaction L-proline + NADP(+) = (S)-1-pyrroline-5-carboxylate + NADPH + 2 H(+). The catalysed reaction is L-proline + NAD(+) = (S)-1-pyrroline-5-carboxylate + NADH + 2 H(+). It participates in amino-acid biosynthesis; L-proline biosynthesis; L-proline from L-glutamate 5-semialdehyde: step 1/1. Its function is as follows. Catalyzes the reduction of 1-pyrroline-5-carboxylate (PCA) to L-proline. The polypeptide is Pyrroline-5-carboxylate reductase (Staphylococcus haemolyticus (strain JCSC1435)).